The primary structure comprises 67 residues: Large ribosomal subunit protein uL29 (67 aa).

Belongs to the universal ribosomal protein uL29 family.

This Exiguobacterium sibiricum (strain DSM 17290 / CCUG 55495 / CIP 109462 / JCM 13490 / 255-15) protein is Large ribosomal subunit protein uL29.